A 222-amino-acid chain; its full sequence is Ribonuclease S-3 (222 aa).

An N-terminal signal peptide occupies residues 1–22 (MFRLQLISAFFILLFSLSPVSA). A disulfide bond links cysteine 38 and cysteine 44. A glycan (N-linked (GlcNAc...) asparagine) is linked at asparagine 50. Catalysis depends on histidine 54, which acts as the Proton donor. RNA-binding positions include histidine 54, 92–93 (QM), 109–110 (HE), and 113–114 (RH). 3 disulfide bridges follow: cysteine 68–cysteine 117, cysteine 177–cysteine 210, and cysteine 193–cysteine 204. The active site involves glutamate 110. Catalysis depends on histidine 114, which acts as the Proton acceptor.

The protein belongs to the RNase T2 family.

It localises to the secreted. The protein localises to the extracellular space. It catalyses the reaction a ribonucleotidyl-ribonucleotide-RNA + H2O = a 3'-end 3'-phospho-ribonucleotide-RNA + a 5'-end dephospho-ribonucleoside-RNA + H(+). Self-incompatibility (SI) is the inherited ability of a flowering plant to prevent self-fertilization by discriminating between self and non-self pollen during pollination. In many species, self-incompatibility is controlled by the single, multiallelic locus S. The sequence is that of Ribonuclease S-3 (S3) from Petunia hybrida (Petunia).